A 224-amino-acid polypeptide reads, in one-letter code: Ribosomal RNA small subunit methyltransferase G (224 aa).

Residues Gly92, Leu97, 143–144 (VE), and Arg156 each bind S-adenosyl-L-methionine.

Belongs to the methyltransferase superfamily. RNA methyltransferase RsmG family.

Its subcellular location is the cytoplasm. It carries out the reaction guanosine(527) in 16S rRNA + S-adenosyl-L-methionine = N(7)-methylguanosine(527) in 16S rRNA + S-adenosyl-L-homocysteine. Functionally, specifically methylates the N7 position of guanine in position 527 of 16S rRNA. This Albidiferax ferrireducens (strain ATCC BAA-621 / DSM 15236 / T118) (Rhodoferax ferrireducens) protein is Ribosomal RNA small subunit methyltransferase G.